A 127-amino-acid polypeptide reads, in one-letter code: Fumarate reductase subunit C (127 aa).

Transmembrane regions (helical) follow at residues 30-50, 67-87, and 107-127; these read ATIL…GCLV, IVVV…QTFF, and IIVL…LVLV.

This sequence belongs to the FrdC family. As to quaternary structure, part of an enzyme complex containing four subunits: a flavoprotein (FrdA), an iron-sulfur protein (FrdB), and two hydrophobic anchor proteins (FrdC and FrdD).

Its subcellular location is the cell inner membrane. Functionally, anchors the catalytic components of the fumarate reductase complex to the cell membrane, binds quinones. This is Fumarate reductase subunit C from Photobacterium profundum (strain SS9).